The sequence spans 198 residues: Host transcription reprogramming factor 1 (198 aa).

Positions 1-19 (MQLSNFLSIWALVAMGATA) are cleaved as a signal peptide. Disordered regions lie at residues 21-59 (PMPSGSAPGNPFADGEAYGARPSQGLTPVPKVHDGSYHS) and 71-198 (ERLA…PVQL). A C2H2-type zinc finger spans residues 58-81 (HSCETCAAPFRTEERLAAHRQADH). 3 stretches are compositionally biased toward basic and acidic residues: residues 71–80 (ERLAAHRQAD), 104–128 (TSERERLDRLASRVGEDYVEKRSQE), and 167–177 (KLDKPTRKEQY).

Its subcellular location is the secreted. The protein localises to the host nucleus. Its function is as follows. Secreted effector that translocates into the nuclei of host cells to reprogram the expression of immunity-associated genes by binding to effector binding elements (EBEs) in rice. Binds the 5'-CAATCTTC-3' EBE of promoters from targeted rice genes and probably recruits a yet to be determined host repressor. Causes ambivalent immunity with increased susceptibility to the hemibiotrophic pathogens Magnaporthe oryzae and Xanthomonas oryzae pv. oryzae, but enhances resistance to Cochliobolus miyabeanus, a necrotrophic pathogen. This is Host transcription reprogramming factor 1 from Pyricularia oryzae (strain 70-15 / ATCC MYA-4617 / FGSC 8958) (Rice blast fungus).